A 558-amino-acid polypeptide reads, in one-letter code: MSFKTDAEIAQSSTMRPIGEIAAKLGLNADNIEPYGHYKAKINPAEAFKLPQKQGRLILVTAINPTPAGEGKTTVTIGLADALRHIGKDSVIALREPSLGPVFGVKGGAAGGGYAQVLPMEDINLHFTGDFHAIGAANNLLAAMLDNHIYQGNELDIDPKRVLWRRVVDMNDRQLRNIIDGMGKPVDGVMRPDGFDITVASEVMAVFCLAKDISDLKERLGNILVAYAKDGSPVYAKDLKANGAMAALLKDAIKPNLVQTIEGTPAFVHGGPFANIAHGCNSVTATRLAKHLADYAVTEAGFGADLGAEKFCDIKCRLAGLKPDAAVVVATVRALKYNGGVERANLGEENLDALEKGLPNLLKHISNLKNVFGLPVVVALNRFVSDSDAELAMIEKACAEHGVEVSLTEVWGKGGAGGADLARKVVNAIESQTNNFGFAYDVELGIKDKIRAIAQKVYGAEDVDFSAEASAEIASLEKLGLDKMPICMAKTQYSLSDNAKLLGCPEGFRIAVRGITVSAGAGFIVALCGNMMKMPGLPKVPAAEKIDVDEHGVIHGLF.

66-73 (TPAGEGKT) contacts ATP.

The protein belongs to the formate--tetrahydrofolate ligase family.

It catalyses the reaction (6S)-5,6,7,8-tetrahydrofolate + formate + ATP = (6R)-10-formyltetrahydrofolate + ADP + phosphate. The protein operates within one-carbon metabolism; tetrahydrofolate interconversion. The sequence is that of Formate--tetrahydrofolate ligase from Neisseria meningitidis serogroup C (strain 053442).